The following is a 384-amino-acid chain: MKSKKILIVGAGFSGAVIGRQLAEKGHQVHIIDQRDHIGGNSYDARDSETNVMVHVYGPHIFHTDNETVWNYVNKHAEMMPYVNRVKATVNGQVFSLPINLHTINQFFSKTCSPDEARALIAEKGDSTIADPQTFEEQALRFIGKELYEAFFKGYTIKQWGMQPSELPASILKRLPVRFNYDDNYFNHKFQGMPKCGYTQMIKSILNHENIKVDLQREFIVEERTHYDHVFYSGPLDAFYGYQYGRLGYRTLDFKKFTYQGDYQGCAVMNYCSVDVPYTRITEHKYFSPWEQHDGSVCYKEYSRACEENDIPYYPIRQMGEMALLEKYLSLAENETNITFVGRLGTYRYLDMDVTIAEALKTAEVYLNSLTENQPMPVFTVSVR.

An N-terminal signal peptide occupies residues 1–23 (MKSKKILIVGAGFSGAVIGRQLA). FAD is bound by residues Ser14, 33–34 (DQ), Asn41, and 60–61 (HI). UDP-alpha-D-galactose contacts are provided by Asn84, Phe151, Thr156, Trp160, and Tyr185. Residue Phe219 participates in FAD binding. UDP-alpha-D-galactose contacts are provided by Asn270, Arg280, and Tyr314. Arg343 serves as a coordination point for FAD. Tyr349 serves as a coordination point for UDP-alpha-D-galactose. An FAD-binding site is contributed by 350 to 355 (LDMDVT).

The protein belongs to the UDP-galactopyranose/dTDP-fucopyranose mutase family. Homodimer. FAD is required as a cofactor.

The catalysed reaction is UDP-alpha-D-galactose = UDP-alpha-D-galactofuranose. The protein operates within bacterial outer membrane biogenesis; LPS O-antigen biosynthesis. Involved in the biosynthesis of the galactose-containing O-side-chain polysaccharide backbone structure of D-galactan I which is a key component of lipopolysaccharide (LPS). Catalyzes the interconversion through a 2-keto intermediate of uridine diphosphogalactopyranose (UDP-GalP) into uridine diphosphogalactofuranose (UDP-GalF) which is the biosynthetic precursor of galactofuranosyl residues. The polypeptide is UDP-galactopyranose mutase (rfbD) (Klebsiella pneumoniae).